The primary structure comprises 470 residues: Cysteine--tRNA ligase (470 aa).

Cys-28 serves as a coordination point for Zn(2+). A 'HIGH' region motif is present at residues Pro-30–Asn-40. The Zn(2+) site is built by Cys-212, His-237, and Glu-241. The 'KMSKS' region motif lies at Lys-271–Ser-275. ATP is bound at residue Lys-274.

This sequence belongs to the class-I aminoacyl-tRNA synthetase family. Monomer. It depends on Zn(2+) as a cofactor.

The protein resides in the cytoplasm. The catalysed reaction is tRNA(Cys) + L-cysteine + ATP = L-cysteinyl-tRNA(Cys) + AMP + diphosphate. The sequence is that of Cysteine--tRNA ligase from Lactiplantibacillus plantarum (strain ATCC BAA-793 / NCIMB 8826 / WCFS1) (Lactobacillus plantarum).